A 323-amino-acid chain; its full sequence is MKFDRHRRLRSSATMRDMVRENHVRKEDLIYPIFVVEKDDVKKEIKSLPGVYQISLNLLESELKEAYDLGIRAIMFFGVPNSKDDIGTGAYIHDGVIQQATRIAKKMYDDLLIVADTCLCEYTDHGHCGVIDDHTHDVDNDKSLPLLVKTAISQVEAGADIIAPSNMMDGFVAEIRRGLDEAGYYNIPIMSYGVKYASSFFGPFRDAADSAPSFGDRKTYQMDPANRLEALRELESDLKEGCDMMIVKPALSYLDIVRDVKNHTNVPVVAYNVSGEYSMTKAAAQNGWIDEERVVMEQMVSMKRAGADMIITYCKDICRYLDN.

Residues cysteine 118, cysteine 120, and cysteine 128 each contribute to the Zn(2+) site. Residue lysine 195 is the Schiff-base intermediate with substrate of the active site. 5-aminolevulinate contacts are provided by arginine 205 and arginine 217. Glutamate 233 contributes to the Mg(2+) binding site. The active-site Schiff-base intermediate with substrate is the lysine 248. Residues serine 274 and tyrosine 313 each contribute to the 5-aminolevulinate site.

The protein belongs to the ALAD family. In terms of assembly, homooctamer. The cofactor is Zn(2+).

The catalysed reaction is 2 5-aminolevulinate = porphobilinogen + 2 H2O + H(+). It participates in porphyrin-containing compound metabolism; protoporphyrin-IX biosynthesis; coproporphyrinogen-III from 5-aminolevulinate: step 1/4. Catalyzes an early step in the biosynthesis of tetrapyrroles. Binds two molecules of 5-aminolevulinate per subunit, each at a distinct site, and catalyzes their condensation to form porphobilinogen. In Staphylococcus aureus, this protein is Delta-aminolevulinic acid dehydratase (hemB).